The primary structure comprises 283 residues: Nucleotide-binding protein ABBFA_002973 (283 aa).

Residue 9-16 (GQSGSGKS) participates in ATP binding. 59-62 (DVRS) provides a ligand contact to GTP.

This sequence belongs to the RapZ-like family.

Functionally, displays ATPase and GTPase activities. In Acinetobacter baumannii (strain AB307-0294), this protein is Nucleotide-binding protein ABBFA_002973.